A 292-amino-acid polypeptide reads, in one-letter code: 4-hydroxy-tetrahydrodipicolinate synthase (292 aa).

T45 contacts pyruvate. Y133 (proton donor/acceptor) is an active-site residue. K161 functions as the Schiff-base intermediate with substrate in the catalytic mechanism. I203 is a pyruvate binding site.

This sequence belongs to the DapA family. Homotetramer; dimer of dimers.

The protein localises to the cytoplasm. It catalyses the reaction L-aspartate 4-semialdehyde + pyruvate = (2S,4S)-4-hydroxy-2,3,4,5-tetrahydrodipicolinate + H2O + H(+). It functions in the pathway amino-acid biosynthesis; L-lysine biosynthesis via DAP pathway; (S)-tetrahydrodipicolinate from L-aspartate: step 3/4. In terms of biological role, catalyzes the condensation of (S)-aspartate-beta-semialdehyde [(S)-ASA] and pyruvate to 4-hydroxy-tetrahydrodipicolinate (HTPA). In Herminiimonas arsenicoxydans, this protein is 4-hydroxy-tetrahydrodipicolinate synthase.